The primary structure comprises 107 residues: Pyrimidine/purine nucleoside phosphorylase (107 aa).

The protein belongs to the nucleoside phosphorylase PpnP family.

It carries out the reaction a purine D-ribonucleoside + phosphate = a purine nucleobase + alpha-D-ribose 1-phosphate. The catalysed reaction is adenosine + phosphate = alpha-D-ribose 1-phosphate + adenine. The enzyme catalyses cytidine + phosphate = cytosine + alpha-D-ribose 1-phosphate. It catalyses the reaction guanosine + phosphate = alpha-D-ribose 1-phosphate + guanine. It carries out the reaction inosine + phosphate = alpha-D-ribose 1-phosphate + hypoxanthine. The catalysed reaction is thymidine + phosphate = 2-deoxy-alpha-D-ribose 1-phosphate + thymine. The enzyme catalyses uridine + phosphate = alpha-D-ribose 1-phosphate + uracil. It catalyses the reaction xanthosine + phosphate = alpha-D-ribose 1-phosphate + xanthine. Functionally, catalyzes the phosphorolysis of diverse nucleosides, yielding D-ribose 1-phosphate and the respective free bases. Can use uridine, adenosine, guanosine, cytidine, thymidine, inosine and xanthosine as substrates. Also catalyzes the reverse reactions. The polypeptide is Pyrimidine/purine nucleoside phosphorylase (Azoarcus sp. (strain BH72)).